The primary structure comprises 264 residues: MALVVKGKVNINEFIDLSKSEKLLPSMFTPVKSVMVSKVDKIMVHENESLSEVNLLKGVKLIEGGYVCLVGLVVSGEWNLPDNCRGGVSVCMVDKRMERADEATLGSYYTAAAKKRFQFKVVPNYGITTKDAEKNIWQVLVNIKNVKMSAGYCPLSLEFVSVCIVYKNNIKLGLREKVTSVNDGGPMELSEEVVDEFMENVPMSVRLAKFRTKSSKRGPKNNNNLGKGRSGGRPKPKSFDEVEKEFDNLIEDEAETSVADSDSY.

The interval 211-264 (RTKSSKRGPKNNNNLGKGRSGGRPKPKSFDEVEKEFDNLIEDEAETSVADSDSY) is disordered. Positions 237–247 (KSFDEVEKEFD) are enriched in basic and acidic residues.

Belongs to the tobamovirus movement protein family. As to quaternary structure, binds to host RBCS at the plasmodesmata; this interaction seems required for viral systemic movement. In resistant plants, interacts with host MBP2C at host microtubules; this interaction prevents virus cell to cell movement. In resistant plants, interacts with host resistance (R) protein (e.g. tomato ToMV resistance protein TM-2(2), AC Q71BG9) at the host plasma membrane; this interaction triggers host defense responses leading to programmed cell death.

It localises to the host cytoplasm. Its subcellular location is the host cytoskeleton. The protein resides in the host cell junction. It is found in the host plasmodesma. Functionally, transports viral genome to neighboring plant cells directly through plasmosdesmata, without any budding. The movement protein allows efficient cell to cell propagation, by bypassing the host cell wall barrier. Forms a ribonucleoprotein complex with viral RNA. Binds microtubules and modulates microtubule stability. Can bind double-stranded DNA. Triggers host hypersensitive defense reaction in incompatible plants harboring resistance (R) proteins. The chain is Movement protein (MP) from Antirrhinum majus (Garden snapdragon).